The following is a 195-amino-acid chain: SPI-2 type 3 secretion system translocon protein SctB (195 aa).

The stretch at 44–80 forms a coiled coil; it reads KLMELAKKLRDIMRSYNVEKQRLAWELQVNVLQTQMK. Helical transmembrane passes span 90-110, 115-135, and 170-190; these read MITA…GAVG, LIAG…GAGV, and EIMQ…AEIL.

Belongs to the SctB/EspB family. The core secretion machinery of the T3SS is composed of approximately 20 different proteins, including cytoplasmic components, a base, an export apparatus and a needle. This subunit is involved in the formation of a pore, called the translocon, in host membrane. May form a complex with SseB and SseC/SctE2. SseB is required for correct localization of SseD/SctB2 on the bacterial cell surface. Binds to the chaperone SseA.

Its subcellular location is the secreted. It is found in the cell surface. The protein resides in the host membrane. In terms of biological role, component of the type III secretion system 2 (SPI-2 T3SS), also called injectisome, which is used to inject bacterial effector proteins into eukaryotic host cells. SseC/SctE2 and SseD/SctB2 are inserted into the host membrane where they form a pore and allow the translocation of effector proteins into the cytosol of target cells. Required for the translocation of SPI-2 effector proteins. Required for systemic Salmonella infection of the mouse. Essential for SpvB-induced actin depolymerization in the host cell cytoplasm. This is SPI-2 type 3 secretion system translocon protein SctB from Salmonella typhimurium (strain LT2 / SGSC1412 / ATCC 700720).